Consider the following 176-residue polypeptide: Flavodoxin 1 (176 aa).

The 162-residue stretch at 4–165 (TGIFFGSDTG…RVEKWVKQIS (162 aa)) folds into the Flavodoxin-like domain.

Belongs to the flavodoxin family. Requires FMN as cofactor.

Its function is as follows. Low-potential electron donor to a number of redox enzymes (Potential). Involved in the reactivation of inactive cob(II)alamin in methionine synthase. This chain is Flavodoxin 1 (fldA), found in Escherichia coli O157:H7.